Reading from the N-terminus, the 517-residue chain is Transmembrane protein 180 (517 aa).

At 1-11 the chain is on the extracellular side; that stretch reads MRLGGPWAWLL. The chain crosses the membrane as a helical span at residues 12-43; that stretch reads GLPTAVVYGSLALFVSVLHNVFLLYYVDTFVS. The Cytoplasmic segment spans residues 44-55; sequence VYKIDKAAFWVG. A helical transmembrane segment spans residues 56 to 74; that stretch reads ETVFLLWNSLNDPLFGWLS. Topologically, residues 75-100 are extracellular; sequence DRQFLSSQPRSGAGLSSRAVVLARVR. Residues 101–118 form a helical membrane-spanning segment; it reads ALGWHGPLLALSFLAFWV. Over 119 to 126 the chain is Cytoplasmic; that stretch reads PWAPAGLQ. The chain crosses the membrane as a helical span at residues 127–151; sequence FLLCLCLYDGFLTLVDLHHHALLAD. Topologically, residues 152–155 are extracellular; the sequence is LALS. The chain crosses the membrane as a helical span at residues 156 to 179; sequence AHDRTHLNFYCSLFSAAGSLSVFA. Over 180 to 191 the chain is Cytoplasmic; that stretch reads SYAFWNKEDFSS. The chain crosses the membrane as a helical span at residues 192–223; sequence FRAFCLALATGSGLGFVGAARLLRRRVEAAGR. At 224–264 the chain is on the extracellular side; the sequence is EPGCPAMAVNDGLCEEELLVGGEEAGSITLGQYLQQLARHR. The helical transmembrane segment at 265-292 threads the bilayer; sequence NFLWFVGMDLVQVFHCHFNSNFFPLFLE. The Cytoplasmic segment spans residues 293 to 305; that stretch reads HLLSDHISLSTGS. The chain crosses the membrane as a helical span at residues 306-325; the sequence is FLLGISYVAPHLNNLYFLPL. Residues 326 to 330 are Extracellular-facing; that stretch reads CRRWG. A helical membrane pass occupies residues 331–350; it reads VYAVVRGLFLLKLGLSLLML. At 351–358 the chain is on the cytoplasmic side; it reads LAGPDHPG. A helical transmembrane segment spans residues 359–393; sequence LLCLFIASNRVFTEGTCKLLTLVVTDLVDEDLVLN. Residues 394-402 are Extracellular-facing; the sequence is HRKQAASAL. The chain crosses the membrane as a helical span at residues 403–429; sequence LFGMVALVTKPGQTFAPLLGTWLLCFY. The Cytoplasmic segment spans residues 430–466; it reads TGHDLFQQHPPAPVGSAQPWPEPPAPPPAQAPPLRQG. The helical transmembrane segment at 467 to 485 threads the bilayer; sequence CFYLLVLVPIACALLQLFT. At 486-517 the chain is on the extracellular side; the sequence is WSQFTLHGRRLHMVKAQRQSLSRAQTLDVKMV.

It is found in the cell membrane. This chain is Transmembrane protein 180, found in Bos taurus (Bovine).